Here is a 100-residue protein sequence, read N- to C-terminus: NADH-quinone oxidoreductase subunit K (100 aa).

Transmembrane regions (helical) follow at residues 4 to 24 (LQHG…GLLV), 28 to 48 (LLFM…AFIV), and 60 to 80 (VMYI…LALL).

Belongs to the complex I subunit 4L family. NDH-1 is composed of 13 different subunits. Subunits NuoA, H, J, K, L, M, N constitute the membrane sector of the complex.

The protein resides in the cell inner membrane. The enzyme catalyses a quinone + NADH + 5 H(+)(in) = a quinol + NAD(+) + 4 H(+)(out). Its function is as follows. NDH-1 shuttles electrons from NADH, via FMN and iron-sulfur (Fe-S) centers, to quinones in the respiratory chain. The immediate electron acceptor for the enzyme in this species is believed to be ubiquinone. Couples the redox reaction to proton translocation (for every two electrons transferred, four hydrogen ions are translocated across the cytoplasmic membrane), and thus conserves the redox energy in a proton gradient. In Serratia proteamaculans (strain 568), this protein is NADH-quinone oxidoreductase subunit K.